The primary structure comprises 344 residues: uncharacterized protein (344 aa).

Helical transmembrane passes span Gly25–Val45, Phe68–Val88, Gly104–Cys124, Ser133–Ala153, Gly161–Val181, Leu224–Leu244, Val276–Leu296, and Leu302–Val322.

Belongs to the peptidase S58 family.

The protein resides in the cell membrane. Aminopeptidase. This is an uncharacterized protein from Mycobacterium bovis (strain ATCC BAA-935 / AF2122/97).